We begin with the raw amino-acid sequence, 20 residues long: Manganese peroxidase H5 (20 aa).

It belongs to the peroxidase family. Ligninase subfamily.

The protein resides in the secreted. The catalysed reaction is 2 Mn(2+) + H2O2 + 2 H(+) = 2 Mn(3+) + 2 H2O. Catalyzes the oxidation of Mn(2+) to Mn(3+). The latter, acting as a diffusible redox mediator, is capable of oxidizing a variety of lignin compounds. This Phanerodontia chrysosporium (White-rot fungus) protein is Manganese peroxidase H5.